Here is a 319-residue protein sequence, read N- to C-terminus: Adenosine receptor A3 (319 aa).

Topologically, residues Met-1–Thr-15 are extracellular. N-linked (GlcNAc...) asparagine glycans are attached at residues Asn-5 and Asn-13. Residues Tyr-16–Val-38 form a helical membrane-spanning segment. Residues Lys-39 to Val-49 lie on the Cytoplasmic side of the membrane. Residues Tyr-50–Val-73 traverse the membrane as a helical segment. The Extracellular portion of the chain corresponds to Ser-74 to Leu-85. Cysteines 84 and 167 form a disulfide. The chain crosses the membrane as a helical span at residues Phe-86–Val-107. Over His-108–Arg-127 the chain is Cytoplasmic. A helical transmembrane segment spans residues Ile-128–Gly-149. The Extracellular segment spans residues Trp-150 to Met-178. Residue Asn-161 is glycosylated (N-linked (GlcNAc...) asparagine). Residues Val-179–Leu-199 traverse the membrane as a helical segment. At Asp-200–Ser-232 the chain is on the cytoplasmic side. A helical transmembrane segment spans residues Leu-233–Phe-256. Residues Asp-257–Asp-262 lie on the Extracellular side of the membrane. The helical transmembrane segment at Val-263 to Cys-285 threads the bilayer. The Cytoplasmic portion of the chain corresponds to Lys-286–Glu-319. Cys-304 carries S-palmitoyl cysteine lipidation.

This sequence belongs to the G-protein coupled receptor 1 family. Phosphorylation on Thr-317 and Thr-318 may be crucial for rapid desensitization. Phosphorylation on Thr-317 may be necessary for phosphorylation on Thr-318 to occur.

It localises to the cell membrane. Functionally, receptor for adenosine. The activity of this receptor is mediated by G proteins which inhibits adenylyl cyclase. In Mus musculus (Mouse), this protein is Adenosine receptor A3 (Adora3).